Reading from the N-terminus, the 205-residue chain is Probable thymidylate kinase (205 aa).

7–14 (GIDGAGKS) lines the ATP pocket.

Belongs to the thymidylate kinase family.

It catalyses the reaction dTMP + ATP = dTDP + ADP. This Thermococcus onnurineus (strain NA1) protein is Probable thymidylate kinase.